The following is a 384-amino-acid chain: ATP phosphoribosyltransferase regulatory subunit (384 aa).

It belongs to the class-II aminoacyl-tRNA synthetase family. HisZ subfamily. In terms of assembly, heteromultimer composed of HisG and HisZ subunits.

It is found in the cytoplasm. The protein operates within amino-acid biosynthesis; L-histidine biosynthesis; L-histidine from 5-phospho-alpha-D-ribose 1-diphosphate: step 1/9. Functionally, required for the first step of histidine biosynthesis. May allow the feedback regulation of ATP phosphoribosyltransferase activity by histidine. The chain is ATP phosphoribosyltransferase regulatory subunit from Azoarcus sp. (strain BH72).